A 281-amino-acid polypeptide reads, in one-letter code: Probable ABC transporter ATP-binding protein AZC_3926 (281 aa).

A disordered region spans residues 1-38 (MNVLSMFGRNATRETSSPAATAGRYADEGDWEGDDHQP). The region spanning 45–277 (LAAFGLAKSY…PDVRRLYLGE (233 aa)) is the ABC transporter domain. 77–84 (GPNGAGKT) provides a ligand contact to ATP.

Belongs to the ABC transporter superfamily.

The protein is Probable ABC transporter ATP-binding protein AZC_3926 of Azorhizobium caulinodans (strain ATCC 43989 / DSM 5975 / JCM 20966 / LMG 6465 / NBRC 14845 / NCIMB 13405 / ORS 571).